A 585-amino-acid polypeptide reads, in one-letter code: Proline--tRNA ligase (585 aa).

An Isoglutamyl lysine isopeptide (Lys-Gln) (interchain with Q-Cter in protein Pup) cross-link involves residue Lys173.

The protein belongs to the class-II aminoacyl-tRNA synthetase family. ProS type 1 subfamily. As to quaternary structure, homodimer.

It localises to the cytoplasm. The catalysed reaction is tRNA(Pro) + L-proline + ATP = L-prolyl-tRNA(Pro) + AMP + diphosphate. Its function is as follows. Catalyzes the attachment of proline to tRNA(Pro) in a two-step reaction: proline is first activated by ATP to form Pro-AMP and then transferred to the acceptor end of tRNA(Pro). As ProRS can inadvertently accommodate and process non-cognate amino acids such as alanine and cysteine, to avoid such errors it has two additional distinct editing activities against alanine. One activity is designated as 'pretransfer' editing and involves the tRNA(Pro)-independent hydrolysis of activated Ala-AMP. The other activity is designated 'posttransfer' editing and involves deacylation of mischarged Ala-tRNA(Pro). The misacylated Cys-tRNA(Pro) is not edited by ProRS. This Mycolicibacterium smegmatis (strain ATCC 700084 / mc(2)155) (Mycobacterium smegmatis) protein is Proline--tRNA ligase (proS).